Here is a 406-residue protein sequence, read N- to C-terminus: MELRVANANGSCENGSIVSLYCSSQEVLCQIVRGISPEEPYNATLITWQERVRKKYGFYIGVGLAFLSCFLIGTSVILKKKGLIRLVATGATRAVNGGYGYLKDPMWWAGMATMSAGEVANFGAYAFAPATVVTPLGALSVLISAIFSSYCLGESLNLLGKLGCVICMAGSTVMVIHAPKEEKVTTVAEMASKMKDTGFIVFAVLLVVSCLILIFIVAPRYGQRNILIYIIICSVIGSFSVTAVKGLGVTIRNFFQGLPVVRHPLPYILSLILGLSIIIQVNFLNRALDIFNTSLVFPIYYVFFTTVVVASSIVLFKEWYTMSAVDIVGTLSGFVTIILGVFMLHAFKDLDINQISLPHTHKNPTPAPAPEPTVIKLEDKNVLVDNIELASTPSPQQKPKVFMTDS.

The Extracellular segment spans residues 1-57; it reads MELRVANANGSCENGSIVSLYCSSQEVLCQIVRGISPEEPYNATLITWQERVRKKYG. N9, N14, and N42 each carry an N-linked (GlcNAc...) asparagine glycan. The helical transmembrane segment at 58-78 threads the bilayer; the sequence is FYIGVGLAFLSCFLIGTSVIL. Over 79–126 the chain is Cytoplasmic; that stretch reads KKKGLIRLVATGATRAVNGGYGYLKDPMWWAGMATMSAGEVANFGAYA. A helical membrane pass occupies residues 127 to 147; that stretch reads FAPATVVTPLGALSVLISAIF. Residues 148-155 are Extracellular-facing; that stretch reads SSYCLGES. The chain crosses the membrane as a helical span at residues 156 to 176; the sequence is LNLLGKLGCVICMAGSTVMVI. Topologically, residues 177–197 are cytoplasmic; the sequence is HAPKEEKVTTVAEMASKMKDT. A helical membrane pass occupies residues 198–218; it reads GFIVFAVLLVVSCLILIFIVA. Residues 219-225 lie on the Extracellular side of the membrane; it reads PRYGQRN. The helical transmembrane segment at 226–246 threads the bilayer; the sequence is ILIYIIICSVIGSFSVTAVKG. The Cytoplasmic portion of the chain corresponds to 247–263; the sequence is LGVTIRNFFQGLPVVRH. Residues 264–284 form a helical membrane-spanning segment; it reads PLPYILSLILGLSIIIQVNFL. Residues 285–295 are Extracellular-facing; sequence NRALDIFNTSL. N-linked (GlcNAc...) asparagine glycosylation is present at N292. A helical membrane pass occupies residues 296-316; the sequence is VFPIYYVFFTTVVVASSIVLF. Residues 317–326 lie on the Cytoplasmic side of the membrane; that stretch reads KEWYTMSAVD. A helical transmembrane segment spans residues 327-347; the sequence is IVGTLSGFVTIILGVFMLHAF. Topologically, residues 348 to 406 are extracellular; that stretch reads KDLDINQISLPHTHKNPTPAPAPEPTVIKLEDKNVLVDNIELASTPSPQQKPKVFMTDS.

It belongs to the NIPA family.

Its subcellular location is the cell membrane. The enzyme catalyses Mg(2+)(in) = Mg(2+)(out). In terms of biological role, acts as a Mg(2+) transporter. Can also transport other divalent cations such as Ba(2+), Sr(2+) and Fe(2+) but to a much less extent than Mg(2+). May be a receptor for ligands (trioxilins A3 and B3) from the hepoxilin pathway. The protein is Magnesium transporter NIPA4 (Nipal4) of Mus musculus (Mouse).